An 81-amino-acid polypeptide reads, in one-letter code: uncharacterized protein (81 aa).

An N-terminal signal peptide occupies residues 1-22; sequence MNKKLSIIFLIFALIASVLCSA. The disordered stretch occupies residues 29–81; the sequence is HSSSTTTTTSSSGGTSGTDSSINTGSSYSGSGSGSGSTGGSGSGSGSGTAKWK. Residues 30-58 show a composition bias toward low complexity; it reads SSSTTTTTSSSGGTSGTDSSINTGSSYSG. A compositionally biased stretch (gly residues) spans 59–75; sequence SGSGSGSTGGSGSGSGS.

The protein resides in the secreted. This is an uncharacterized protein from Dictyostelium discoideum (Social amoeba).